A 254-amino-acid polypeptide reads, in one-letter code: Probable transcriptional regulatory protein Cyan7425_4347 (254 aa).

This sequence belongs to the TACO1 family.

Its subcellular location is the cytoplasm. The protein is Probable transcriptional regulatory protein Cyan7425_4347 of Cyanothece sp. (strain PCC 7425 / ATCC 29141).